Here is an 878-residue protein sequence, read N- to C-terminus: Probable receptor-like protein kinase At4g39110 (878 aa).

A signal peptide spans 1-43; sequence MEIRKKPNIFTVLVIDFSSKPSMALLLAILLFLSGPSASAVAA. The Extracellular segment spans residues 44–440; that stretch reads AAVGPATGFK…GRTTGMGKHG (397 aa). N-linked (GlcNAc...) asparagine glycans are attached at residues Asn-170, Asn-183, Asn-254, Asn-317, and Asn-382. Residues 441–461 form a helical membrane-spanning segment; the sequence is MVATAGFVMMFGAFIGLGAMV. The Cytoplasmic segment spans residues 462-878; the sequence is YKWKKRPQDW…FTQFANLNGR (417 aa). One can recognise a Protein kinase domain in the interval 526–798; that stretch reads FEASQIIGVG…GDVLWNLEYA (273 aa). ATP-binding positions include 532–540 and Lys-554; that span reads IGVGGFGNV. The active-site Proton acceptor is Asp-650. The disordered stretch occupies residues 808 to 844; it reads GKAEETENAKPDVVTPGSVPVSDPSPITPSVTTNEAA.

The protein belongs to the protein kinase superfamily. Ser/Thr protein kinase family.

The protein resides in the membrane. This chain is Probable receptor-like protein kinase At4g39110, found in Arabidopsis thaliana (Mouse-ear cress).